The following is a 316-amino-acid chain: Nucleotide-binding protein Sala_2050 (316 aa).

Residue 18–25 (GLSGAGKS) participates in ATP binding. 69–72 (DSRS) is a binding site for GTP. The interval 283-316 (GYEPTLTHRNLDSAPQDGLEGKPPSAARASGGAR) is disordered.

It belongs to the RapZ-like family.

In terms of biological role, displays ATPase and GTPase activities. This chain is Nucleotide-binding protein Sala_2050, found in Sphingopyxis alaskensis (strain DSM 13593 / LMG 18877 / RB2256) (Sphingomonas alaskensis).